A 305-amino-acid chain; its full sequence is Serine/threonine-protein phosphatase PP-X isozyme 2 (305 aa).

4 residues coordinate Mn(2+): D51, H53, D79, and N111. The Proton donor role is filled by H112. 2 residues coordinate Mn(2+): H161 and H236.

This sequence belongs to the PPP phosphatase family. PP-4 (PP-X) subfamily. Requires Mn(2+) as cofactor. Ubiquitous, mostly expressed in root mersitems, flowers, and vascular tissues.

Its subcellular location is the plastid stroma. The catalysed reaction is O-phospho-L-seryl-[protein] + H2O = L-seryl-[protein] + phosphate. The enzyme catalyses O-phospho-L-threonyl-[protein] + H2O = L-threonyl-[protein] + phosphate. The polypeptide is Serine/threonine-protein phosphatase PP-X isozyme 2 (PPX2) (Arabidopsis thaliana (Mouse-ear cress)).